A 173-amino-acid chain; its full sequence is Photosystem I assembly protein Ycf3 (173 aa).

TPR repeat units follow at residues 35–68 (AFVY…EDDA), 72–105 (SYIL…NPNL), and 120–153 (GERA…APNN).

The protein belongs to the Ycf3 family.

It is found in the cellular thylakoid membrane. Essential for the assembly of the photosystem I (PSI) complex. May act as a chaperone-like factor to guide the assembly of the PSI subunits. The sequence is that of Photosystem I assembly protein Ycf3 from Gloeothece citriformis (strain PCC 7424) (Cyanothece sp. (strain PCC 7424)).